The sequence spans 150 residues: D-aminoacyl-tRNA deacylase (150 aa).

The Gly-cisPro motif, important for rejection of L-amino acids motif lies at 140 to 141; that stretch reads GP.

The protein belongs to the DTD family. In terms of assembly, homodimer.

It localises to the cytoplasm. It carries out the reaction glycyl-tRNA(Ala) + H2O = tRNA(Ala) + glycine + H(+). The enzyme catalyses a D-aminoacyl-tRNA + H2O = a tRNA + a D-alpha-amino acid + H(+). An aminoacyl-tRNA editing enzyme that deacylates mischarged D-aminoacyl-tRNAs. Also deacylates mischarged glycyl-tRNA(Ala), protecting cells against glycine mischarging by AlaRS. Acts via tRNA-based rather than protein-based catalysis; rejects L-amino acids rather than detecting D-amino acids in the active site. By recycling D-aminoacyl-tRNA to D-amino acids and free tRNA molecules, this enzyme counteracts the toxicity associated with the formation of D-aminoacyl-tRNA entities in vivo and helps enforce protein L-homochirality. In Kluyveromyces lactis (strain ATCC 8585 / CBS 2359 / DSM 70799 / NBRC 1267 / NRRL Y-1140 / WM37) (Yeast), this protein is D-aminoacyl-tRNA deacylase (DTD1).